A 331-amino-acid chain; its full sequence is Glutamyl-tRNA reductase (331 aa).

Substrate contacts are provided by residues 49 to 52 (TCNR), Ser-107, 112 to 114 (EDQ), and Gln-118. Cys-50 acts as the Nucleophile in catalysis. NADP(+) is bound at residue 184–189 (GNGEIG).

It belongs to the glutamyl-tRNA reductase family. Homodimer.

It carries out the reaction (S)-4-amino-5-oxopentanoate + tRNA(Glu) + NADP(+) = L-glutamyl-tRNA(Glu) + NADPH + H(+). It functions in the pathway porphyrin-containing compound metabolism; protoporphyrin-IX biosynthesis; 5-aminolevulinate from L-glutamyl-tRNA(Glu): step 1/2. Catalyzes the NADPH-dependent reduction of glutamyl-tRNA(Glu) to glutamate 1-semialdehyde (GSA). The polypeptide is Glutamyl-tRNA reductase (Acetivibrio thermocellus (strain ATCC 27405 / DSM 1237 / JCM 9322 / NBRC 103400 / NCIMB 10682 / NRRL B-4536 / VPI 7372) (Clostridium thermocellum)).